The primary structure comprises 2422 residues: Interferon-induced very large GTPase 1 (2422 aa).

The segment at 945–965 (ENFFEDSDSPTKSSSTEPSPH) is disordered. Over residues 954-963 (PTKSSSTEPS) the composition is skewed to low complexity. Residues 1479 to 1720 (DKRLFVLSIL…KISDVKSRVQ (242 aa)) enclose the VLIG-type G domain. GTP-binding positions include 1489–1496 (GLQSSGKS), 1542–1545 (DTEG), and 1619–1622 (TATD).

The protein belongs to the TRAFAC class dynamin-like GTPase superfamily. Very large inducible GTPase (VLIG) family.

The protein localises to the cytoplasm. It localises to the cytosol. The protein resides in the nucleus. The sequence is that of Interferon-induced very large GTPase 1 (GVINP1) from Homo sapiens (Human).